A 225-amino-acid chain; its full sequence is MEIEVGEPEAQRLKLPWCREAHWRETLPAMLNELDPGPIELDCRDWQLGCRDLHQLRELLNKEGVTLTRIHANLRETLVSAAALGYPTHMASPQGNSSKTRSSDTQPKPKTPQKLLFHQGTLRSGDHLSAEGDVLLLGDVNPGARISAGGDVMVWGRLRGIAHAGQDGDTKAKIVALQLRPLQLRIADAVARGPEDQPQPGLAEEARLEGDTIMIEPARANRFNG.

A disordered region spans residues 87-112 (PTHMASPQGNSSKTRSSDTQPKPKTP). Over residues 91–108 (ASPQGNSSKTRSSDTQPK) the composition is skewed to polar residues.

It belongs to the MinC family. As to quaternary structure, interacts with MinD and FtsZ.

In terms of biological role, cell division inhibitor that blocks the formation of polar Z ring septums. Rapidly oscillates between the poles of the cell to destabilize FtsZ filaments that have formed before they mature into polar Z rings. Prevents FtsZ polymerization. This chain is Probable septum site-determining protein MinC, found in Prochlorococcus marinus (strain MIT 9313).